The primary structure comprises 315 residues: Homoserine kinase (315 aa).

Position 97-107 (97-107 (PPARGLGSSAT)) interacts with ATP.

Belongs to the GHMP kinase family. Homoserine kinase subfamily.

Its subcellular location is the cytoplasm. It catalyses the reaction L-homoserine + ATP = O-phospho-L-homoserine + ADP + H(+). The protein operates within amino-acid biosynthesis; L-threonine biosynthesis; L-threonine from L-aspartate: step 4/5. Catalyzes the ATP-dependent phosphorylation of L-homoserine to L-homoserine phosphate. The protein is Homoserine kinase of Prochlorococcus marinus subsp. pastoris (strain CCMP1986 / NIES-2087 / MED4).